Consider the following 704-residue polypeptide: Elongation factor G (704 aa).

Residues 8-290 (ARYRNIGISA…AVIEYLPAPT (283 aa)) form the tr-type G domain. Residues 17–24 (AHIDAGKT), 88–92 (DTPGH), and 142–145 (NKMD) contribute to the GTP site.

Belongs to the TRAFAC class translation factor GTPase superfamily. Classic translation factor GTPase family. EF-G/EF-2 subfamily.

It is found in the cytoplasm. In terms of biological role, catalyzes the GTP-dependent ribosomal translocation step during translation elongation. During this step, the ribosome changes from the pre-translocational (PRE) to the post-translocational (POST) state as the newly formed A-site-bound peptidyl-tRNA and P-site-bound deacylated tRNA move to the P and E sites, respectively. Catalyzes the coordinated movement of the two tRNA molecules, the mRNA and conformational changes in the ribosome. The polypeptide is Elongation factor G (Proteus mirabilis (strain HI4320)).